The following is a 595-amino-acid chain: Elongation factor 4 (595 aa).

Positions lysine 2–lysine 183 constitute a tr-type G domain. GTP-binding positions include aspartate 14–threonine 19 and asparagine 130–aspartate 133.

It belongs to the TRAFAC class translation factor GTPase superfamily. Classic translation factor GTPase family. LepA subfamily.

It localises to the cell inner membrane. The catalysed reaction is GTP + H2O = GDP + phosphate + H(+). In terms of biological role, required for accurate and efficient protein synthesis under certain stress conditions. May act as a fidelity factor of the translation reaction, by catalyzing a one-codon backward translocation of tRNAs on improperly translocated ribosomes. Back-translocation proceeds from a post-translocation (POST) complex to a pre-translocation (PRE) complex, thus giving elongation factor G a second chance to translocate the tRNAs correctly. Binds to ribosomes in a GTP-dependent manner. The sequence is that of Elongation factor 4 from Parabacteroides distasonis (strain ATCC 8503 / DSM 20701 / CIP 104284 / JCM 5825 / NCTC 11152).